We begin with the raw amino-acid sequence, 181 residues long: Crustacyanin-C1 subunit (181 aa).

3 cysteine pairs are disulfide-bonded: C12–C121, C51–C173, and C117–C150.

Belongs to the calycin superfamily. Lipocalin family. As to quaternary structure, oligomer; Can form dimers (beta-crustacyanin); or complexes of 16 subunits (alpha-crustacyanin). There are five types of subunits: A1, A2, A3, C1 and C2. Found in the carapace.

The protein resides in the secreted. The protein localises to the extracellular space. Functionally, binds the carotenoid astaxanthin (AXT) which provides the blue coloration to the carapace of the lobster. The polypeptide is Crustacyanin-C1 subunit (Homarus gammarus (European lobster)).